A 229-amino-acid chain; its full sequence is 2-phytyl-1,4-naphtoquinone methyltransferase (229 aa).

Belongs to the class I-like SAM-binding methyltransferase superfamily. MenG/UbiE family.

It carries out the reaction demethylphylloquinol + S-adenosyl-L-methionine = phylloquinol + S-adenosyl-L-homocysteine + H(+). It participates in cofactor biosynthesis; phylloquinone biosynthesis. Methyltransferase required for the conversion of 2-phytyl-1,4-beta-naphthoquinol to phylloquinol. In Nostoc sp. (strain PCC 7120 / SAG 25.82 / UTEX 2576), this protein is 2-phytyl-1,4-naphtoquinone methyltransferase.